Reading from the N-terminus, the 655-residue chain is RNA-binding protein EWS (655 aa).

The tract at residues 1 to 285 is EAD (Gln/Pro/Thr-rich); that stretch reads MASTDYSTYS…GVYGQESGGF (285 aa). Tandem repeats lie at residues 8-16, 17-27, 28-34, 35-42, 43-50, 51-59, 60-68, 69-75, 76-84, 85-91, 92-110, 111-116, 117-125, 126-156, 157-163, 164-170, 171-177, 178-188, 189-193, 194-201, 202-206, 207-212, 213-218, 219-224, 225-230, 231-238, 239-245, 246-252, 253-259, 260-276, and 277-285. The tract at residues 8–285 is 31 X approximate tandem repeats; that stretch reads TYSQAAAQQG…GVYGQESGGF (278 aa). The disordered stretch occupies residues 121 to 350; sequence QPAYPTYGQQ…EGPDLDLGLP (230 aa). 2 stretches are compositionally biased toward polar residues: residues 127–137 and 146–172; these read YGQQPTATAPT and AETS…NYSY. Residues 192-266 show a composition bias toward low complexity; sequence PTSYSSSQPT…QSSSYGQQSS (75 aa). Residues 256–285 form the IQ domain; it reads QQSSSYGQQSSFRQDHPSSMGVYGQESGGF. Residue Ser266 is modified to Phosphoserine; by PKC. An asymmetric dimethylarginine mark is found at Arg300, Arg302, Arg304, Arg309, Arg314, Arg317, and Arg321. Over residues 308-334 the composition is skewed to gly residues; the sequence is DRGGMSRGGRGGGRGGLGAGERGGFNK. The span at 335-350 shows a compositional bias: low complexity; the sequence is PGGPMDEGPDLDLGLP. The 87-residue stretch at 360–446 folds into the RRM domain; sequence SAIYVQGLND…SKLKVSLARK (87 aa). N6-acetyllysine is present on Lys438. Disordered regions lie at residues 447 to 524 and 544 to 655; these read KPPM…WQCP and APKP…DRPY. 2 positions are modified to asymmetric dimethylarginine: Arg454 and Arg463. Arg470 bears the Asymmetric dimethylarginine; alternate mark. Arg470 is modified (omega-N-methylarginine; alternate). The span at 471–489 shows a compositional bias: gly residues; it reads GGPGGPGGPGGPMGRMGGR. Arg485 carries the post-translational modification Omega-N-methylarginine. Position 489 is an asymmetric dimethylarginine; by PRMT8 (Arg489). Residues Arg493, Arg499, and Arg502 each carry the asymmetric dimethylarginine modification. An Asymmetric dimethylarginine; alternate modification is found at Arg505. Arg505 is modified (omega-N-methylarginine; alternate). The segment at 517–548 adopts a RanBP2-type zinc-finger fold; it reads RAGDWQCPNPGCGNQNFAWRTECNQCKAPKPE. Pro residues predominate over residues 550–559; that stretch reads FLPPPFPPPG. Arg562 and Arg564 each carry asymmetric dimethylarginine. A compositionally biased stretch (gly residues) spans 565 to 590; the sequence is GGPGGMRGGRGGLMDRGGPGGMFRGG. Position 571 is an asymmetric dimethylarginine; alternate; by PRMT8 (Arg571). An Omega-N-methylarginine; alternate; by PRMT8 modification is found at Arg571. 4 positions are modified to asymmetric dimethylarginine: Arg574, Arg580, Arg588, and Arg591. The span at 591 to 605 shows a compositional bias: basic and acidic residues; it reads RGGDRGGFRGGRGMD. Asymmetric dimethylarginine; alternate; by PRMT8 is present on Arg595. Arg595 is modified (omega-N-methylarginine; alternate; by PRMT8). The residue at position 599 (Arg599) is an Asymmetric dimethylarginine. Arg602 is modified (asymmetric dimethylarginine; by PRMT8). The residue at position 606 (Arg606) is an Asymmetric dimethylarginine; alternate; by PRMT8. The residue at position 606 (Arg606) is an Omega-N-methylarginine; alternate; by PRMT8. Over residues 606-617 the composition is skewed to gly residues; sequence RGGFGGGRRGGP. Arg614 carries the asymmetric dimethylarginine; alternate modification. Arg614 carries the omega-N-methylarginine; alternate modification. Asymmetric dimethylarginine occurs at positions 632 and 635. The Nuclear localization signal motif lies at 638 to 655; sequence PGKMDKGEHRQERRDRPY. The segment covering 640-655 has biased composition (basic and acidic residues); the sequence is KMDKGEHRQERRDRPY.

The protein belongs to the RRM TET family. As to quaternary structure, binds RNA, POLR2C, SF1 and calmodulin. Interacts with PTK2B and TDRD3. Forms a complex with REC8, PRDM9, SYCP3 and SYCP1; complex formation is dependent of phosphorylated form of REC8 and requires PRDM9 bound to hotspot DNA; EWSR1 joins PRDM9 with the chromosomal axis through REC8. Post-translationally, phosphorylated; calmodulin-binding inhibits phosphorylation of Ser-266. In terms of processing, highly methylated on arginine residues. Methylation is mediated by PRMT1 and, at lower level by PRMT8.

Its subcellular location is the nucleus. The protein localises to the cytoplasm. It localises to the cell membrane. Binds to ssRNA containing the consensus sequence 5'-AGGUAA-3'. Might function as a transcriptional repressor. This Mus musculus (Mouse) protein is RNA-binding protein EWS (Ewsr1).